A 416-amino-acid polypeptide reads, in one-letter code: Homeobox protein ceh-62 (416 aa).

Over residues 103 to 113 (TPTPIIATPSI) the composition is skewed to low complexity. 2 disordered regions span residues 103–144 (TPTP…QATR) and 178–247 (FQNR…FPPT). Over residues 118-127 (QPLQSPSAPN) the composition is skewed to polar residues. A DNA-binding region (homeobox) is located at residues 130-189 (SRRKRTTFSPEQATRLEAEYIGDSYMAREKRHLLAQSLKLSENQVKTWFQNRRAKDKRDR). Low complexity predominate over residues 193 to 218 (NASNHTSNSRRSSPSRKSSSDSTPTP). Residues 219 to 240 (TQATQFDMPTQIQTASPPTTAD) are compositionally biased toward polar residues.

It is found in the nucleus. The chain is Homeobox protein ceh-62 from Caenorhabditis elegans.